A 276-amino-acid polypeptide reads, in one-letter code: Glucosamine-6-phosphate deaminase 2 (276 aa).

The Proton acceptor; for enolization step role is filled by D72. Residues 105 to 130 (HILDGNAADLQAECDAFENKIKEAGG) are a coiled coil. The active-site For ring-opening step is the D141. The Proton acceptor; for ring-opening step role is filled by H143. E148 functions as the For ring-opening step in the catalytic mechanism. T161 carries the post-translational modification Phosphothreonine.

Belongs to the glucosamine/galactosamine-6-phosphate isomerase family. As to quaternary structure, homohexamer. In terms of tissue distribution, ubiquitous, with highest expression detected in testis, ovary, placenta, and heart.

It localises to the cytoplasm. The catalysed reaction is alpha-D-glucosamine 6-phosphate + H2O = beta-D-fructose 6-phosphate + NH4(+). It functions in the pathway nucleotide-sugar biosynthesis; UDP-N-acetyl-alpha-D-glucosamine biosynthesis; alpha-D-glucosamine 6-phosphate from D-fructose 6-phosphate: step 1/1. Allosterically activated by N-acetylglucosamine-6-phosphate (GlcNAc6P). Functionally, catalyzes the reversible conversion of alpha-D-glucosamine 6-phosphate (GlcN-6P) into beta-D-fructose 6-phosphate (Fru-6P) and ammonium ion, a regulatory reaction step in de novo uridine diphosphate-N-acetyl-alpha-D-glucosamine (UDP-GlcNAc) biosynthesis via hexosamine pathway. Deamination is coupled to aldo-keto isomerization mediating the metabolic flux from UDP-GlcNAc toward Fru-6P. At high ammonium level can drive amination and isomerization of Fru-6P toward hexosamines and UDP-GlcNAc synthesis. Has a role in fine tuning the metabolic fluctuations of cytosolic UDP-GlcNAc and their effects on hyaluronan synthesis that occur during tissue remodeling. The protein is Glucosamine-6-phosphate deaminase 2 of Homo sapiens (Human).